A 281-amino-acid polypeptide reads, in one-letter code: Probable thioesterase gloN (281 aa).

Residues 207-233 form a disordered region; the sequence is LDDGSNNSRDLNETSPTETSNDSETQA. Over residues 210 to 232 the composition is skewed to polar residues; that stretch reads GSNNSRDLNETSPTETSNDSETQ.

The protein belongs to the AMT4 thioesterase family.

The protein operates within mycotoxin biosynthesis. Its function is as follows. Probable thioesterase; part of the gene cluster that mediates the biosynthesis of pneumocandins, lipohexapeptides of the echinocandin family that prevent fungal cell wall formation by non-competitive inhibition of beta-1,3-glucan synthase. The 10,12-dimethylmyristoyl side chain is synthesized by the reducing polyketide synthase gloL/GLPKS4. The thioesterase gloN/GLHYD exclusively interacts with gloL/GLPKS4 to maintain turnover of the polyketide side chain. The 10R,12S-dimethylmyristic acid is then transferred to the first thiolation domain of the nonribosomal peptide synthetase gloA/GLNRPS4 by the acyl-AMP ligase gloD/GLligase, followed by its acylation to L-ornithine to trigger elongation of the cyclic hexapeptide. L-ornithine, 4R-hydroxyl-L-proline (generated from L-proline by the dioxygenase gloF/GLOXY2), 3S-hydroxyl-L-homotyrosine (generated by gloG/GLHtyB, gloH/GLHtyA, gloI/GLHtyC, gloJ/GLHtyD and hydroxylated at C-3 by the dioxygenase gloM/GLOXY1), 3R-hydroxyl-L-glutamine (generated from L-glutamine probably by the dioxygenase gloE/GLOXY3) and 3S-hydroxyl-L-proline (generated from L-proline by the dioxygenase gloF/GLOXY2 to yield pneumocandin B0), or 3S-hydroxyl-4S-methyl-L-proline (generated from L-leucine by the dioxygenase gloC/GLOXY4 to yield pneumocandin A0) are sequentially added to the growing chain. The last C domain of gloA/GLNRPS4 is proposed to be responsible for cyclization by condensation to form the peptide bond between L-ornithine and 3S-hydroxyl-4S-methyl-L-proline (for pneumocandin A0) or 3S-hydroxyl-L-proline (for pneumocandin B0). Finally, the subsequent C-4 hydroxylation of 3S-hydroxyl-L-homotyrosine and L-ornithine dihydroxylation at C-4 and C-5 are performed by the cytochrome P450 monooxygenases gloP/GLP450-1 and gloO/GLP450-2, respectively. The chain is Probable thioesterase gloN from Glarea lozoyensis (strain ATCC 20868 / MF5171).